The following is an 89-amino-acid chain: MSLSVEAKAKIVADFGRGTNDSGSTEVQVALLTAQINHLQGHFSEHKKDHHSRRGLLRMVSQRRKLLDYLKRKDVARYTSLIERLGLRR.

Belongs to the universal ribosomal protein uS15 family. Part of the 30S ribosomal subunit. Forms a bridge to the 50S subunit in the 70S ribosome, contacting the 23S rRNA.

In terms of biological role, one of the primary rRNA binding proteins, it binds directly to 16S rRNA where it helps nucleate assembly of the platform of the 30S subunit by binding and bridging several RNA helices of the 16S rRNA. Its function is as follows. Forms an intersubunit bridge (bridge B4) with the 23S rRNA of the 50S subunit in the ribosome. The sequence is that of Small ribosomal subunit protein uS15 from Pectobacterium carotovorum subsp. carotovorum (strain PC1).